The chain runs to 407 residues: Probable tRNA sulfurtransferase (407 aa).

Residues 61 to 165 (NEITYRLSKI…LDAIYMYEEV (105 aa)) enclose the THUMP domain. ATP contacts are provided by residues 183-184 (ML), 208-209 (HF), Arg-265, Gly-287, and Gln-296.

The protein belongs to the ThiI family.

It localises to the cytoplasm. It carries out the reaction [ThiI sulfur-carrier protein]-S-sulfanyl-L-cysteine + a uridine in tRNA + 2 reduced [2Fe-2S]-[ferredoxin] + ATP + H(+) = [ThiI sulfur-carrier protein]-L-cysteine + a 4-thiouridine in tRNA + 2 oxidized [2Fe-2S]-[ferredoxin] + AMP + diphosphate. It catalyses the reaction [ThiS sulfur-carrier protein]-C-terminal Gly-Gly-AMP + S-sulfanyl-L-cysteinyl-[cysteine desulfurase] + AH2 = [ThiS sulfur-carrier protein]-C-terminal-Gly-aminoethanethioate + L-cysteinyl-[cysteine desulfurase] + A + AMP + 2 H(+). It functions in the pathway cofactor biosynthesis; thiamine diphosphate biosynthesis. Catalyzes the ATP-dependent transfer of a sulfur to tRNA to produce 4-thiouridine in position 8 of tRNAs, which functions as a near-UV photosensor. Also catalyzes the transfer of sulfur to the sulfur carrier protein ThiS, forming ThiS-thiocarboxylate. This is a step in the synthesis of thiazole, in the thiamine biosynthesis pathway. The sulfur is donated as persulfide by IscS. This Staphylococcus aureus (strain JH1) protein is Probable tRNA sulfurtransferase.